The chain runs to 337 residues: DNA-directed RNA polymerase subunit alpha (337 aa).

Positions 1 to 233 (MIQKNWQELI…DQLAIFVNFE (233 aa)) are alpha N-terminal domain (alpha-NTD). Positions 249 to 337 (FNPALLKKVD…DLAKRYEDQY (89 aa)) are alpha C-terminal domain (alpha-CTD).

The protein belongs to the RNA polymerase alpha chain family. In terms of assembly, homodimer. The RNAP catalytic core consists of 2 alpha, 1 beta, 1 beta' and 1 omega subunit. When a sigma factor is associated with the core the holoenzyme is formed, which can initiate transcription.

It carries out the reaction RNA(n) + a ribonucleoside 5'-triphosphate = RNA(n+1) + diphosphate. In terms of biological role, DNA-dependent RNA polymerase catalyzes the transcription of DNA into RNA using the four ribonucleoside triphosphates as substrates. The sequence is that of DNA-directed RNA polymerase subunit alpha from Brucella anthropi (strain ATCC 49188 / DSM 6882 / CCUG 24695 / JCM 21032 / LMG 3331 / NBRC 15819 / NCTC 12168 / Alc 37) (Ochrobactrum anthropi).